We begin with the raw amino-acid sequence, 373 residues long: Cystathionine gamma-synthase/O-acetylhomoserine (thiol)-lyase (373 aa).

Lys197 is modified (N6-(pyridoxal phosphate)lysine).

This sequence belongs to the trans-sulfuration enzymes family. Homotetramer. Requires pyridoxal 5'-phosphate as cofactor.

The protein localises to the cytoplasm. It catalyses the reaction O-acetyl-L-homoserine + L-cysteine = L,L-cystathionine + acetate + H(+). The catalysed reaction is O-acetyl-L-homoserine + hydrogen sulfide = L-homocysteine + acetate. Its pathway is amino-acid biosynthesis; L-methionine biosynthesis via de novo pathway. Its function is as follows. Catalyzes the formation of L-cystathionine from O-acetyl-L-homoserine and L-cysteine. Cannot use O-succinyl-L-homoserine as substrate. Also exhibits O-acetylhomoserine thiolyase activity, catalyzing the synthesis of L-homocysteine from O-acetyl-L-homoserine and sulfide. This Bacillus subtilis (strain 168) protein is Cystathionine gamma-synthase/O-acetylhomoserine (thiol)-lyase (metI).